A 129-amino-acid polypeptide reads, in one-letter code: ATP synthase epsilon chain (129 aa).

Belongs to the ATPase epsilon chain family. In terms of assembly, F-type ATPases have 2 components, CF(1) - the catalytic core - and CF(0) - the membrane proton channel. CF(1) has five subunits: alpha(3), beta(3), gamma(1), delta(1), epsilon(1). CF(0) has three main subunits: a, b and c.

The protein localises to the cell inner membrane. Produces ATP from ADP in the presence of a proton gradient across the membrane. The chain is ATP synthase epsilon chain from Campylobacter jejuni subsp. doylei (strain ATCC BAA-1458 / RM4099 / 269.97).